A 293-amino-acid chain; its full sequence is Formamidopyrimidine-DNA glycosylase (293 aa).

Pro-2 functions as the Schiff-base intermediate with DNA in the catalytic mechanism. Residue Glu-3 is the Proton donor of the active site. Lys-58 acts as the Proton donor; for beta-elimination activity in catalysis. DNA-binding residues include His-104, Arg-123, and Lys-166. An FPG-type zinc finger spans residues 257 to 293 (QVYDREGEPCRTDGCGGVVKRFVQNGRSTFWCPKCQR). Arg-283 functions as the Proton donor; for delta-elimination activity in the catalytic mechanism.

The protein belongs to the FPG family. Monomer. Zn(2+) serves as cofactor.

It carries out the reaction Hydrolysis of DNA containing ring-opened 7-methylguanine residues, releasing 2,6-diamino-4-hydroxy-5-(N-methyl)formamidopyrimidine.. The catalysed reaction is 2'-deoxyribonucleotide-(2'-deoxyribose 5'-phosphate)-2'-deoxyribonucleotide-DNA = a 3'-end 2'-deoxyribonucleotide-(2,3-dehydro-2,3-deoxyribose 5'-phosphate)-DNA + a 5'-end 5'-phospho-2'-deoxyribonucleoside-DNA + H(+). Its function is as follows. Involved in base excision repair of DNA damaged by oxidation or by mutagenic agents. Acts as a DNA glycosylase that recognizes and removes damaged bases. Has a preference for oxidized purines, such as 7,8-dihydro-8-oxoguanine (8-oxoG). Has AP (apurinic/apyrimidinic) lyase activity and introduces nicks in the DNA strand. Cleaves the DNA backbone by beta-delta elimination to generate a single-strand break at the site of the removed base with both 3'- and 5'-phosphates. In Bradyrhizobium sp. (strain BTAi1 / ATCC BAA-1182), this protein is Formamidopyrimidine-DNA glycosylase.